The primary structure comprises 129 residues: Intraflagellar transport protein 20 homolog (129 aa).

A coiled-coil region spans residues 89 to 121 (VLLQMTIRELTVEKERLRVELEAVRKIEKEQDE).

Component of the IFT complex B composed of at least che-2, che-13, dyf-1, dyf-3, dyf-6, dyf-11, dyf-13, ift-20, ift-74, ift-81, ifta-2, osm-1, osm-5 and osm-6.

The protein localises to the cell projection. It is found in the cilium. Functionally, component of the intraflagellar transport (IFT) complex B required for transport of proteins in the motile cilium. Required for ciliary entrance and transport of specific ciliary cargo proteins such as che-3 which are related to motility. This Caenorhabditis elegans protein is Intraflagellar transport protein 20 homolog.